Here is a 619-residue protein sequence, read N- to C-terminus: Chaperone protein DnaK (619 aa).

At Thr-175 the chain carries Phosphothreonine; by autocatalysis. Residues 578–619 (NGGAQGQGFDPNNMGGANAGAGATNNNDDNVVDADFEVQDDK) form a disordered region. Positions 589–606 (NNMGGANAGAGATNNNDD) are enriched in low complexity. The span at 607–619 (NVVDADFEVQDDK) shows a compositional bias: acidic residues.

The protein belongs to the heat shock protein 70 family.

Its function is as follows. Acts as a chaperone. The sequence is that of Chaperone protein DnaK from Clostridium perfringens (strain ATCC 13124 / DSM 756 / JCM 1290 / NCIMB 6125 / NCTC 8237 / Type A).